The primary structure comprises 729 residues: Pentatricopeptide repeat-containing protein At5g01110 (729 aa).

Residues 26-45 (TSSSPVFEPSSSSSSSSSSA) form a disordered region. A compositionally biased stretch (low complexity) spans 27-45 (SSSPVFEPSSSSSSSSSSA). 17 PPR repeats span residues 112-147 (TSLS…GVSR), 164-198 (NDSV…GFTV), 199-233 (SIDA…GVGI), 234-268 (NVYT…GVYP), 269-303 (DIVT…GFSP), 304-338 (GVYT…GLSP), 339-373 (DSTT…DVVP), 374-408 (DLVC…GLIP), 409-443 (DNVI…GCAM), 444-478 (DVVT…ALFP), 479-513 (DSYT…RIRL), 514-548 (DVVT…EILP), 549-583 (TPIS…NIKP), 584-618 (TVMI…GFVP), 619-649 (DCIS…MEEE), 656-690 (DVFT…GVNP), and 691-725 (DRST…GFSP).

This sequence belongs to the PPR family. P subfamily.

This is Pentatricopeptide repeat-containing protein At5g01110 from Arabidopsis thaliana (Mouse-ear cress).